We begin with the raw amino-acid sequence, 172 residues long: S-ribosylhomocysteine lyase (172 aa).

The Fe cation site is built by His-54, His-58, and Cys-128.

This sequence belongs to the LuxS family. As to quaternary structure, homodimer. Fe cation serves as cofactor.

It carries out the reaction S-(5-deoxy-D-ribos-5-yl)-L-homocysteine = (S)-4,5-dihydroxypentane-2,3-dione + L-homocysteine. Functionally, involved in the synthesis of autoinducer 2 (AI-2) which is secreted by bacteria and is used to communicate both the cell density and the metabolic potential of the environment. The regulation of gene expression in response to changes in cell density is called quorum sensing. Catalyzes the transformation of S-ribosylhomocysteine (RHC) to homocysteine (HC) and 4,5-dihydroxy-2,3-pentadione (DPD). The chain is S-ribosylhomocysteine lyase from Aliivibrio fischeri (strain MJ11) (Vibrio fischeri).